The primary structure comprises 63 residues: Large ribosomal subunit protein bL28 (63 aa).

The protein belongs to the bacterial ribosomal protein bL28 family.

The polypeptide is Large ribosomal subunit protein bL28 (Symbiobacterium thermophilum (strain DSM 24528 / JCM 14929 / IAM 14863 / T)).